Reading from the N-terminus, the 334-residue chain is Spermidine synthase 1 (334 aa).

Over residues methionine 1–glutamate 16 the composition is skewed to basic and acidic residues. Residues methionine 1–lysine 35 form a disordered region. The region spanning proline 45–threonine 282 is the PABS domain. Glutamine 76 serves as a coordination point for S-adenosyl 3-(methylsulfanyl)propylamine. Residue tyrosine 106 coordinates putrescine. Residues glutamine 107, aspartate 131, glutamate 151, aspartate 182–glycine 183, and aspartate 201 contribute to the S-adenosyl 3-(methylsulfanyl)propylamine site. Aspartate 201 (proton acceptor) is an active-site residue. Putrescine-binding positions include aspartate 201–aspartate 204 and tyrosine 270.

Belongs to the spermidine/spermine synthase family. Homotetramer and heterodimer. Component of a multiprotein complex. Interacts with SPMS and SPDSYN2.

The catalysed reaction is S-adenosyl 3-(methylsulfanyl)propylamine + putrescine = S-methyl-5'-thioadenosine + spermidine + H(+). Its pathway is amine and polyamine biosynthesis; spermidine biosynthesis; spermidine from putrescine: step 1/1. The polypeptide is Spermidine synthase 1 (SPDSYN1) (Arabidopsis thaliana (Mouse-ear cress)).